Consider the following 341-residue polypeptide: S-adenosylmethionine:tRNA ribosyltransferase-isomerase (341 aa).

Belongs to the QueA family. Monomer.

Its subcellular location is the cytoplasm. The enzyme catalyses 7-aminomethyl-7-carbaguanosine(34) in tRNA + S-adenosyl-L-methionine = epoxyqueuosine(34) in tRNA + adenine + L-methionine + 2 H(+). Its pathway is tRNA modification; tRNA-queuosine biosynthesis. In terms of biological role, transfers and isomerizes the ribose moiety from AdoMet to the 7-aminomethyl group of 7-deazaguanine (preQ1-tRNA) to give epoxyqueuosine (oQ-tRNA). The sequence is that of S-adenosylmethionine:tRNA ribosyltransferase-isomerase from Desulfitobacterium hafniense (strain DSM 10664 / DCB-2).